Consider the following 603-residue polypeptide: Translation initiation factor IF-2 (603 aa).

One can recognise a tr-type G domain in the interval 112 to 279 (TRPPIITIMG…NINLQAEILD (168 aa)). A G1 region spans residues 121–128 (GHVDHGKT). Position 121–128 (121–128 (GHVDHGKT)) interacts with GTP. The segment at 146–150 (GITQH) is G2. Residues 167–170 (DTPG) form a G3 region. GTP contacts are provided by residues 167–171 (DTPGH) and 221–224 (NKMD). The segment at 221–224 (NKMD) is G4. A G5 region spans residues 257-259 (SAL).

Belongs to the TRAFAC class translation factor GTPase superfamily. Classic translation factor GTPase family. IF-2 subfamily.

The protein localises to the cytoplasm. Its function is as follows. One of the essential components for the initiation of protein synthesis. Protects formylmethionyl-tRNA from spontaneous hydrolysis and promotes its binding to the 30S ribosomal subunits. Also involved in the hydrolysis of GTP during the formation of the 70S ribosomal complex. The sequence is that of Translation initiation factor IF-2 from Mycoplasmopsis pulmonis (strain UAB CTIP) (Mycoplasma pulmonis).